The following is a 358-amino-acid chain: DnaJ homolog subfamily B member 11 (358 aa).

Positions methionine 1 to alanine 22 are cleaved as a signal peptide. Residues aspartate 25–glycine 90 enclose the J domain. Threonine 188 is subject to Phosphothreonine. Asparagine 261 is a glycosylation site (N-linked (GlcNAc...) asparagine).

In terms of assembly, part of a large chaperone multiprotein complex comprising DNAJB11, HSP90B1, HSPA5, HYOU, PDIA2, PDIA4, PDIA6, PPIB, SDF2L1, UGGT1 and very small amounts of ERP29, but not, or at very low levels, CALR nor CANX. Binds to denatured substrates in an ATP-independent manner. Interacts via the J domain with HSPA5 in an ATP-dependent manner. Post-translationally, contains high-mannose Endo H-sensitive carbohydrates. Cys-169, Cys-171, Cys-193 and Cys-196 form intramolecular disulfide bonds. The preferential partner for each Cys is not known.

The protein localises to the endoplasmic reticulum lumen. Its function is as follows. As a co-chaperone for HSPA5 it is required for proper folding, trafficking or degradation of proteins. Binds directly to both unfolded proteins that are substrates for ERAD and nascent unfolded peptide chains, but dissociates from the HSPA5-unfolded protein complex before folding is completed. May help recruiting HSPA5 and other chaperones to the substrate. Stimulates HSPA5 ATPase activity. It is necessary for maturation and correct trafficking of PKD1. This is DnaJ homolog subfamily B member 11 (DNAJB11) from Bos taurus (Bovine).